We begin with the raw amino-acid sequence, 175 residues long: Large ribosomal subunit protein uL10 (175 aa).

This sequence belongs to the universal ribosomal protein uL10 family. Part of the ribosomal stalk of the 50S ribosomal subunit. The N-terminus interacts with L11 and the large rRNA to form the base of the stalk. The C-terminus forms an elongated spine to which L12 dimers bind in a sequential fashion forming a multimeric L10(L12)X complex.

Functionally, forms part of the ribosomal stalk, playing a central role in the interaction of the ribosome with GTP-bound translation factors. The protein is Large ribosomal subunit protein uL10 of Synechococcus sp. (strain WH7803).